Reading from the N-terminus, the 372-residue chain is Spermidine/putrescine import ATP-binding protein PotA (372 aa).

Positions 13-243 (IKLTGISKSF…PKNLFVARFI (231 aa)) constitute an ABC transporter domain. ATP is bound at residue 45-52 (GPSGCGKT).

This sequence belongs to the ABC transporter superfamily. Spermidine/putrescine importer (TC 3.A.1.11.1) family. As to quaternary structure, the complex is composed of two ATP-binding proteins (PotA), two transmembrane proteins (PotB and PotC) and a solute-binding protein (PotD).

It is found in the cell inner membrane. The catalysed reaction is ATP + H2O + polyamine-[polyamine-binding protein]Side 1 = ADP + phosphate + polyamineSide 2 + [polyamine-binding protein]Side 1.. Part of the ABC transporter complex PotABCD involved in spermidine/putrescine import. Responsible for energy coupling to the transport system. The protein is Spermidine/putrescine import ATP-binding protein PotA of Aliivibrio fischeri (strain ATCC 700601 / ES114) (Vibrio fischeri).